A 347-amino-acid chain; its full sequence is S-adenosylmethionine:tRNA ribosyltransferase-isomerase (347 aa).

The protein belongs to the QueA family. As to quaternary structure, monomer.

The protein resides in the cytoplasm. It carries out the reaction 7-aminomethyl-7-carbaguanosine(34) in tRNA + S-adenosyl-L-methionine = epoxyqueuosine(34) in tRNA + adenine + L-methionine + 2 H(+). Its pathway is tRNA modification; tRNA-queuosine biosynthesis. In terms of biological role, transfers and isomerizes the ribose moiety from AdoMet to the 7-aminomethyl group of 7-deazaguanine (preQ1-tRNA) to give epoxyqueuosine (oQ-tRNA). This Pseudomonas aeruginosa (strain UCBPP-PA14) protein is S-adenosylmethionine:tRNA ribosyltransferase-isomerase.